The chain runs to 568 residues: Calcium-dependent protein kinase 5 (568 aa).

The Protein kinase domain occupies 125-379 (EIDRYKLGKG…VEQVLKHRWF (255 aa)). ATP-binding positions include 131-139 (LGKGSYGNV) and K154. D245 acts as the Proton acceptor in catalysis. The J domain autoinhibitory motif signature appears at 400-408 (KFKEFHKLC). Residues 400-435 (KFKEFHKLCKIKKLAVTCIAYQLNEKDIGKLKKTFE) are j domain. The short motif at 409-418 (KIKKLAVTCI) is the J domain EF-hand interaction motif element. 4 EF-hand domains span residues 425 to 460 (KDIG…NDNE), 462 to 495 (DREL…HSIF), 496 to 531 (QQDV…SAVQ), and 534 to 568 (FSKE…GVKE). The Ca(2+) site is built by D438, N440, D442, E449, D473, D475, N477, E484, D509, D511, D513, E520, D547, N549, D551, and E558.

This sequence belongs to the protein kinase superfamily. Ser/Thr protein kinase family. CDPK subfamily. Mg(2+) serves as cofactor. May be palmitoylated. Post-translationally, autophosphorylated in vitro.

The protein resides in the cytoplasm. It localises to the cytoplasmic vesicle. It is found in the secretory vesicle. Its subcellular location is the microneme membrane. The protein localises to the cell membrane. It carries out the reaction L-seryl-[protein] + ATP = O-phospho-L-seryl-[protein] + ADP + H(+). The catalysed reaction is L-threonyl-[protein] + ATP = O-phospho-L-threonyl-[protein] + ADP + H(+). Activated by calcium. Upon calcium binding to the EF-hand domains, the C-terminus of the junction domain (J domain) undergoes a conformational change which results in the dissociation of the pseudo-substrate inhibitory motif from the catalytic domain. This, in turn, may facilitate the autophosphorylation of the activation loop at Thr-285, which leads to the kinase activation. In terms of biological role, calcium-dependent protein kinase which acts as a sensor and effector of intracellular Ca(2+) levels probably in part downstream of cGMP-activated PKG kinase. Plays a central role in host erythrocytes and hepatocytes infection cycles. During the liver stage, involved in sporozoite motility and thus in sporozoite invasion of host hepatocytes, probably together with CDPK1 and CDPK4. Involved in merosome egress from host hepatocytes, probably together with CDPK4. Required for the release of hepatic merozoites from merosomes in the host blood stream. During the asexual blood stage, required for merozoite egress from host erythrocytes by triggering microneme secretion. Phosphorylates transporter NPT1 at late schizont stage. This chain is Calcium-dependent protein kinase 5, found in Plasmodium falciparum (isolate 3D7).